A 155-amino-acid polypeptide reads, in one-letter code: Cytochrome c-type biogenesis protein CcmE (155 aa).

Residues 1 to 8 (MHPKRKQR) lie on the Cytoplasmic side of the membrane. Residues 9–29 (LILVLFVVLVSSVGVSLTLYA) form a helical; Signal-anchor for type II membrane protein membrane-spanning segment. The Periplasmic segment spans residues 30–155 (LNENINLFYP…KTCKGISYDS (126 aa)). Residues His-124 and Tyr-128 each contribute to the heme site.

Belongs to the CcmE/CycJ family.

It is found in the cell inner membrane. Its function is as follows. Heme chaperone required for the biogenesis of c-type cytochromes. Transiently binds heme delivered by CcmC and transfers the heme to apo-cytochromes in a process facilitated by CcmF and CcmH. In Teredinibacter turnerae (strain ATCC 39867 / T7901), this protein is Cytochrome c-type biogenesis protein CcmE.